The primary structure comprises 352 residues: MSKTMKGVSKQAPGYDQMAFIDLSVPEATDDKVLIKVAYTGICGSDIHTFKGEYKNPTTPVVLGHEFSGQVVEVGANVPKVKVGDRVTSETTFYVCGECDYCKEKQYNLCPHRKGIGTQQNGSMANYVLAREESIHLLPDHLSYEGAAMSEPLACCVHAMYQKSHLELKDTIIIMGPGPIGLYLLQIAKEIGAFVIMTGITKDAHRLALAKKLGADVIVDTMKEDLAKVVNEITDGYGVDKVYDASGAVPAVNASLPLIRKQGQFIQVGLFANKMVDLDTESIIQREIEYIGSRSQNPYDWPIAIHLLAKGAINIDEMITKKYPLTEWREAFDKVMEGNEIKVMIESNPEEF.

The Mn(2+) site is built by Cys43, His65, Cys96, Cys99, Cys102, Cys110, and Glu151.

This sequence belongs to the zinc-containing alcohol dehydrogenase family. Homotetramer. The cofactor is Mn(2+).

It catalyses the reaction D-arabinitol 1-phosphate + NAD(+) = D-xylulose 5-phosphate + NADH + H(+). Its activity is regulated as follows. Inhibited by EDTA, 4-hydroxymercuribenzoic acid (PHMB), mercury and zinc ions at a concentration of 2 mM. Involved in the arabitol catabolism via the arabitol phosphate route. Catalyzes only the transformation of D-arabitol 1-phosphate (Arb1P) and D-arabitol 5-phosphate (Arb5P) into D-xylulose 5-phosphate (Xlu5P) and ribulose 5-phosphate, respectively. It can use both NAD and NADP. The chain is D-arabitol-phosphate dehydrogenase from Enterococcus avium (Streptococcus avium).